Reading from the N-terminus, the 131-residue chain is Universal stress protein C (131 aa).

It belongs to the universal stress protein A family.

It localises to the cytoplasm. Required for resistance to DNA-damaging agents. This is Universal stress protein C (uspC) from Salmonella typhi.